Reading from the N-terminus, the 229-residue chain is Cell division topological specificity factor homolog, chloroplastic (229 aa).

A chloroplast-targeting transit peptide spans 1-30; the sequence is MAMSSGTLRISATLVSPYHHHHRNRLSLPS. Residues 35 to 141 form an interaction with MIND1 region; the sequence is VDFTGFISNG…KMILFSDRCD (107 aa). Positions 142-169 are homodimerization; that stretch reads VSDEAKRKIVNNIIHALSDFVEIESEEK.

It belongs to the MinE family. In terms of assembly, homodimer. Interacts with MIND1. These interactions are required for proper intraplastidic localization. Binds to ARC3. Expressed in green tissues, especially at the shoot apex. Also present in leaves, stems, buds, and flowers, especially in sepals, siliques (tip and base), and anthers (mostly in pollen grains).

It is found in the plastid. The protein resides in the chloroplast. Its function is as follows. Acts as a topological specificity factor during plastid division and specify plastid constriction sites (such as the Z-ring) in a MCD1-dependent manner. Especially involved in epidermal plastids division in a FTSZ1-dependent manner. Required for the proper formation of FtsZ rings at the division site in nongreen plastids (e.g. etioplasts). May contribute to gravitropism in stems and hypocotyls. Stimulates MIND1 ATPase activity. In cooperation with MIND1, prevents FtsZ ring formation anywhere outside of the mid-plastids. This Arabidopsis thaliana (Mouse-ear cress) protein is Cell division topological specificity factor homolog, chloroplastic.